A 958-amino-acid chain; its full sequence is Importin-13 (958 aa).

20 HEAT repeats span residues 19–49 (ENVEKALHQLYYDPNIENKNLAQKWLMQAQV), 51–83 (PQAWHFSWLLLNMDKVPEIQYSAPAPCTSRSPA), 90–130 (PDQY…LSMM), 137–174 (AVADMVRMFQAEDSNVDGRARCLALLELLTVLPEEFQT), 189–226 (LAQECGSVFPLLEQLLQQQDSPGFIKQKVLKCFSSWVQ), 231–263 (LMDCENLIQAAFTSLQDPELFDTAVEAVVNAIS), 271–320 (VNTL…ALLD), 325–367 (WQSF…DDIL), 370–433 (EPDK…YEML), 435–471 (AELLSSLYDKLGRLLTNTEQPSTWQHTEALLYGFQSI), 482–517 (VVPGLIGLIPRISISNVQLADTVMFTIGALSEWLAD), 519–553 (PVMINNVLPLVLQALGNPELSISSVSTLKKICREC), 557–595 (LPPYAANIVAVSQEVLMKQIHKTSQCMWLMQALGFLLSA), 598–643 (VEEI…SNLF), 671–711 (PVVV…VKTL), 715–749 (FAPMVPQLCEMLGQMYSTIPQASAIDLTRQLVHIF), 756–798 (FPPI…ALKR), 810–840 (VKALFHCGVLSLKFPEAPTVKASCGFFTELL), 855–888 (ENGKVLLQAVLEGVGGQASRSLMDHFAEILFALN), and 892–926 (FSYLSIWIKEAMQQDGFPSARVSPEQKETFSQQIL). An Importin N-terminal domain is found at 40-106 (AQKWLMQAQV…KSQLFTHITR (67 aa)).

It belongs to the importin beta family.

The protein localises to the cytoplasm. It localises to the nucleus. Its function is as follows. Functions in nuclear protein import as nuclear transport receptor. Serves as receptor for nuclear localization signals (NLS) in cargo substrates. Is thought to mediate docking of the importin/substrate complex to the nuclear pore complex (NPC) through binding to nucleoporin and the complex is subsequently translocated through the pore by an energy requiring, Ran-dependent mechanism. At the nucleoplasmic side of the NPC, Ran binds to the importin, the importin/substrate complex dissociates and importin is re-exported from the nucleus to the cytoplasm where GTP hydrolysis releases Ran. The directionality of nuclear import is thought to be conferred by an asymmetric distribution of the GTP- and GDP-bound forms of Ran between the cytoplasm and nucleus. This is Importin-13 (IPO13) from Gallus gallus (Chicken).